The following is an 875-amino-acid chain: SPbeta prophage-derived uncharacterized protein YomG (875 aa).

A coiled-coil region spans residues 351 to 381 (AKKAEISRINSQITNISQEIEKLKDRLSMDK). Residues 537 to 648 (PVANPTILNN…SIDSSGRILS (112 aa)) enclose the Fibronectin type-III domain.

The sequence is that of SPbeta prophage-derived uncharacterized protein YomG (yomG) from Bacillus subtilis (strain 168).